The primary structure comprises 431 residues: Histidinol dehydrogenase (431 aa).

The NAD(+) site is built by Y130, Q192, and N215. Substrate-binding residues include S238, Q260, and H263. Positions 260 and 263 each coordinate Zn(2+). Catalysis depends on proton acceptor residues E328 and H329. Residues H329, D362, E416, and H421 each coordinate substrate. Zn(2+) is bound at residue D362. H421 is a binding site for Zn(2+).

Belongs to the histidinol dehydrogenase family. Zn(2+) serves as cofactor.

It catalyses the reaction L-histidinol + 2 NAD(+) + H2O = L-histidine + 2 NADH + 3 H(+). It functions in the pathway amino-acid biosynthesis; L-histidine biosynthesis; L-histidine from 5-phospho-alpha-D-ribose 1-diphosphate: step 9/9. In terms of biological role, catalyzes the sequential NAD-dependent oxidations of L-histidinol to L-histidinaldehyde and then to L-histidine. The polypeptide is Histidinol dehydrogenase (Thermosynechococcus vestitus (strain NIES-2133 / IAM M-273 / BP-1)).